The following is a 235-amino-acid chain: Homeobox-leucine zipper protein ATHB-12 (235 aa).

The segment at residues 27-86 is a DNA-binding region (homeobox); the sequence is KSNNQKRFSEEQIKSLELIFESETRLEPRKKVQVARELGLQPRQVAIWFQNKRARWKTKQ. The tract at residues 87 to 122 is leucine-zipper; the sequence is LEKEYNTLRANYNNLASQFEIMKKEKQSLVSELQRL. Basic and acidic residues-rich tracts occupy residues 128-138 and 152-162; these read RPKEEKHHECC and HNGKSEPEGRL. The disordered stretch occupies residues 128–167; that stretch reads RPKEEKHHECCGDQGLALSSSTESHNGKSEPEGRLDQGSV.

It belongs to the HD-ZIP homeobox family. Class I subfamily. In terms of assembly, interacts with TFIIB1. As to expression, widely expressed.

Its subcellular location is the nucleus. Probable transcription activator that may act as growth regulators in response to water deficit. In Arabidopsis thaliana (Mouse-ear cress), this protein is Homeobox-leucine zipper protein ATHB-12 (ATHB-12).